The following is a 600-amino-acid chain: Aspartate--tRNA(Asp/Asn) ligase (600 aa).

Residue Glu-174 coordinates L-aspartate. The aspartate stretch occupies residues 198–201; it reads QLFK. L-aspartate is bound at residue Arg-220. ATP-binding positions include 220–222 and Gln-229; that span reads RDE. His-457 contacts L-aspartate. Glu-491 is an ATP binding site. Arg-498 is an L-aspartate binding site. 543-546 is an ATP binding site; sequence GLDR.

It belongs to the class-II aminoacyl-tRNA synthetase family. Type 1 subfamily. Homodimer.

It localises to the cytoplasm. It carries out the reaction tRNA(Asx) + L-aspartate + ATP = L-aspartyl-tRNA(Asx) + AMP + diphosphate. Its function is as follows. Aspartyl-tRNA synthetase with relaxed tRNA specificity since it is able to aspartylate not only its cognate tRNA(Asp) but also tRNA(Asn). Reaction proceeds in two steps: L-aspartate is first activated by ATP to form Asp-AMP and then transferred to the acceptor end of tRNA(Asp/Asn). The polypeptide is Aspartate--tRNA(Asp/Asn) ligase (Burkholderia orbicola (strain MC0-3)).